Consider the following 499-residue polypeptide: Ribose import ATP-binding protein RbsA (499 aa).

ABC transporter domains lie at valine 3–glutamate 240 and leucine 250–aspartate 494. Residue glycine 35–serine 42 participates in ATP binding.

Belongs to the ABC transporter superfamily. Ribose importer (TC 3.A.1.2.1) family. As to quaternary structure, the complex is composed of an ATP-binding protein (RbsA), two transmembrane proteins (RbsC) and a solute-binding protein (RbsB).

Its subcellular location is the cell membrane. It catalyses the reaction D-ribose(out) + ATP + H2O = D-ribose(in) + ADP + phosphate + H(+). Functionally, part of the ABC transporter complex RbsABC involved in ribose import. Responsible for energy coupling to the transport system. This Shouchella clausii (strain KSM-K16) (Alkalihalobacillus clausii) protein is Ribose import ATP-binding protein RbsA.